Consider the following 704-residue polypeptide: Fatty acid oxidation complex subunit alpha (704 aa).

Residues 1–190 (MSEQKAFSLK…KLGVVDACVP (190 aa)) are enoyl-CoA hydratase. A 3-hydroxyacyl-CoA dehydrogenase region spans residues 308-704 (TAVNKVGVLG…RAGEGRNFYD (397 aa)).

The protein in the N-terminal section; belongs to the enoyl-CoA hydratase/isomerase family. It in the central section; belongs to the 3-hydroxyacyl-CoA dehydrogenase family. Heterotetramer of two alpha chains (FadJ) and two beta chains (FadI).

The protein localises to the cytoplasm. It catalyses the reaction a (3S)-3-hydroxyacyl-CoA = a (2E)-enoyl-CoA + H2O. The enzyme catalyses a 4-saturated-(3S)-3-hydroxyacyl-CoA = a (3E)-enoyl-CoA + H2O. The catalysed reaction is a (3S)-3-hydroxyacyl-CoA + NAD(+) = a 3-oxoacyl-CoA + NADH + H(+). It carries out the reaction (3S)-3-hydroxybutanoyl-CoA = (3R)-3-hydroxybutanoyl-CoA. It functions in the pathway lipid metabolism; fatty acid beta-oxidation. In terms of biological role, catalyzes the formation of a hydroxyacyl-CoA by addition of water on enoyl-CoA. Also exhibits 3-hydroxyacyl-CoA epimerase and 3-hydroxyacyl-CoA dehydrogenase activities. This is Fatty acid oxidation complex subunit alpha from Vibrio campbellii (strain ATCC BAA-1116).